The sequence spans 447 residues: CBL-interacting serine/threonine-protein kinase 9 (447 aa).

The region spanning 19 to 274 is the Protein kinase domain; it reads YEMGRTLGEG…IAELLEDEWF (256 aa). ATP-binding positions include 25–33 and Lys-48; that span reads LGEGSFAKV. Asp-142 acts as the Proton acceptor in catalysis. The interval 160 to 189 is activation loop; that stretch reads DFGLSAFSRQVREDGLLHTACGTPNYVAPE. A Phosphoserine modification is found at Ser-164. Position 178 is a phosphothreonine (Thr-178). The NAF domain occupies 312 to 336; that stretch reads EKPVSMNAFELISSSSEFSLENLFE. The PPI stretch occupies residues 343–372; that stretch reads KKETRFTSQRSASEIMSKMEETAKPLGFNV.

It belongs to the protein kinase superfamily. CAMK Ser/Thr protein kinase family. SNF1 subfamily. Interacts with CBL2 and CBL3. Mn(2+) serves as cofactor. As to expression, expressed at low levels in roots and shoots. Detected in root vascular bundles and in the leaf vascular tissue and hydathode, but not in root tips.

It localises to the cytoplasm. Its subcellular location is the nucleus. It catalyses the reaction L-seryl-[protein] + ATP = O-phospho-L-seryl-[protein] + ADP + H(+). The catalysed reaction is L-threonyl-[protein] + ATP = O-phospho-L-threonyl-[protein] + ADP + H(+). Its function is as follows. CIPK serine-threonine protein kinases interact with CBL proteins. Binding of a CBL protein to the regulatory NAF domain of CIPK protein lead to the activation of the kinase in a calcium-dependent manner. Involved in K(+) homeostasis under low-K(+) stress. This chain is CBL-interacting serine/threonine-protein kinase 9 (CIPK9), found in Arabidopsis thaliana (Mouse-ear cress).